Here is a 63-residue protein sequence, read N- to C-terminus: Conotoxin Cl14.11 (63 aa).

The first 21 residues, 1–21 (MRFLLLLTVALLLTCIMETDA), serve as a signal peptide directing secretion. The propeptide occupies 22–34 (EAKPEDLAERFRE).

Post-translationally, contains 2 disulfide bond. In terms of tissue distribution, expressed by the venom duct.

It is found in the secreted. The protein is Conotoxin Cl14.11 of Californiconus californicus (California cone).